The primary structure comprises 337 residues: Ribosomal RNA small subunit methyltransferase H (337 aa).

Residues 45 to 47 (GGH), Asp64, His91, Asp112, and Gln119 each bind S-adenosyl-L-methionine.

This sequence belongs to the methyltransferase superfamily. RsmH family.

The protein resides in the cytoplasm. It carries out the reaction cytidine(1402) in 16S rRNA + S-adenosyl-L-methionine = N(4)-methylcytidine(1402) in 16S rRNA + S-adenosyl-L-homocysteine + H(+). Its function is as follows. Specifically methylates the N4 position of cytidine in position 1402 (C1402) of 16S rRNA. In Cutibacterium acnes (strain DSM 16379 / KPA171202) (Propionibacterium acnes), this protein is Ribosomal RNA small subunit methyltransferase H.